Here is a 164-residue protein sequence, read N- to C-terminus: Peptidyl-prolyl cis-trans isomerase A-like 4H (164 aa).

Residues 7 to 163 (FFDITVDGKP…KKITIADCGQ (157 aa)) form the PPIase cyclophilin-type domain. N-linked (GlcNAc...) asparagine glycosylation is found at N71 and N108.

The protein belongs to the cyclophilin-type PPIase family. PPIase A subfamily.

Its subcellular location is the cytoplasm. The enzyme catalyses [protein]-peptidylproline (omega=180) = [protein]-peptidylproline (omega=0). In terms of biological role, PPIases accelerate the folding of proteins. It catalyzes the cis-trans isomerization of proline imidic peptide bonds in oligopeptides. In Homo sapiens (Human), this protein is Peptidyl-prolyl cis-trans isomerase A-like 4H.